The chain runs to 146 residues: Ribonuclease H (146 aa).

The 142-residue stretch at 1-142 (MNKIIIYTDG…ADALANLAMD (142 aa)) folds into the RNase H type-1 domain. The Mg(2+) site is built by Asp-9, Glu-47, Asp-70, and Asp-134.

It belongs to the RNase H family. Monomer. It depends on Mg(2+) as a cofactor.

The protein resides in the cytoplasm. It catalyses the reaction Endonucleolytic cleavage to 5'-phosphomonoester.. In terms of biological role, endonuclease that specifically degrades the RNA of RNA-DNA hybrids. The polypeptide is Ribonuclease H (Ruthia magnifica subsp. Calyptogena magnifica).